We begin with the raw amino-acid sequence, 101 residues long: Large ribosomal subunit protein uL24 (101 aa).

The protein belongs to the universal ribosomal protein uL24 family. Part of the 50S ribosomal subunit.

In terms of biological role, one of two assembly initiator proteins, it binds directly to the 5'-end of the 23S rRNA, where it nucleates assembly of the 50S subunit. One of the proteins that surrounds the polypeptide exit tunnel on the outside of the subunit. This is Large ribosomal subunit protein uL24 from Lactococcus lactis subsp. lactis (strain IL1403) (Streptococcus lactis).